The chain runs to 1059 residues: IQ motif-containing protein H (1059 aa).

Residues Lys6 to Gln35 are a coiled coil. The segment at Met245–Asn267 is disordered. Positions His401–Ala430 constitute an IQ domain.

The polypeptide is IQ motif-containing protein H (iqch) (Danio rerio (Zebrafish)).